The following is a 147-amino-acid chain: Hemoglobin subunit epsilon (147 aa).

The Globin domain maps to 3-147 (HFTAEEKATV…VANALAHKYH (145 aa)). Ser-14 and Ser-51 each carry phosphoserine. Positions 64 and 93 each coordinate heme b.

This sequence belongs to the globin family. As to quaternary structure, heterotetramer of two alpha chains and two epsilon chains in early embryonic hemoglobin Gower-2; two zeta chains and two epsilon chains in early embryonic hemoglobin Gower-1. As to expression, red blood cells.

Functionally, the epsilon chain is a beta-type chain of early mammalian embryonic hemoglobin. The polypeptide is Hemoglobin subunit epsilon (HBE1) (Bradypus tridactylus (Pale-throated three-toed sloth)).